Consider the following 273-residue polypeptide: ATP synthase subunit a (273 aa).

The next 7 membrane-spanning stretches (helical) occupy residues 34–54, 94–114, 115–135, 143–163, 171–191, 218–238, and 244–264; these read IINM…CLFM, FIAP…SLDF, LPVD…LITH, DLNG…FYNI, FVHE…NLLL, FLLI…GHVV, and AIFH…LTLV.

It belongs to the ATPase A chain family. As to quaternary structure, F-type ATPases have 2 components, CF(1) - the catalytic core - and CF(0) - the membrane proton channel. CF(1) has five subunits: alpha(3), beta(3), gamma(1), delta(1), epsilon(1). CF(0) has three main subunits: a(1), b(2) and c(9-12). The alpha and beta chains form an alternating ring which encloses part of the gamma chain. CF(1) is attached to CF(0) by a central stalk formed by the gamma and epsilon chains, while a peripheral stalk is formed by the delta and b chains.

The protein localises to the cell inner membrane. Functionally, key component of the proton channel; it plays a direct role in the translocation of protons across the membrane. In Janthinobacterium sp. (strain Marseille) (Minibacterium massiliensis), this protein is ATP synthase subunit a.